The chain runs to 280 residues: Protein lyl-1 (280 aa).

The interval 1-60 (MCPPQAQAEVGPTMTEKAEMVCAPSPAPAPPPKPASPGPPQVEEVGHRGGSSPPRLPPGV) is disordered. Residues 25–40 (SPAPAPPPKPASPGPP) show a composition bias toward pro residues. The region spanning 150–202 (ARRVFTNSRERWRQQNVNGAFAELRKLLPTHPPDRKLSKNEVLRLAMKYIGFL) is the bHLH domain. The disordered stretch occupies residues 214-280 (AAGPTPPGPR…EQTALSPEVR (67 aa)). Residues 229 to 245 (RVPDDGARRGSGRRAEA) show a composition bias toward basic and acidic residues. Residues 257–267 (PDGSPGGAARP) are compositionally biased toward low complexity. A phosphoserine mark is found at S260 and S276.

Efficient DNA binding requires dimerization with another bHLH protein.

The protein resides in the nucleus. This Homo sapiens (Human) protein is Protein lyl-1 (LYL1).